The chain runs to 322 residues: Ethylmalonyl-CoA decarboxylase (322 aa).

Residue lysine 232 is modified to N6-acetyllysine; alternate. An N6-succinyllysine; alternate modification is found at lysine 232. The residue at position 316 (lysine 316) is an N6-succinyllysine.

Belongs to the enoyl-CoA hydratase/isomerase family.

The protein localises to the cytoplasm. It is found in the cytosol. The catalysed reaction is (2S)-ethylmalonyl-CoA + H(+) = butanoyl-CoA + CO2. It carries out the reaction (S)-methylmalonyl-CoA + H(+) = propanoyl-CoA + CO2. It catalyses the reaction (2R)-ethylmalonyl-CoA + H(+) = butanoyl-CoA + CO2. Functionally, decarboxylates ethylmalonyl-CoA, a potentially toxic metabolite, to form butyryl-CoA, suggesting it might be involved in metabolite proofreading. Acts preferentially on (S)-ethylmalonyl-CoA but also has some activity on the (R)-isomer. Also has methylmalonyl-CoA decarboxylase activity at lower level. This Mus musculus (Mouse) protein is Ethylmalonyl-CoA decarboxylase (Echdc1).